We begin with the raw amino-acid sequence, 324 residues long: Polycomb complex protein BMI-1 (324 aa).

The segment at 18-57 adopts an RING-type zinc-finger fold; that stretch reads CVLCGGYFIDATTIIECLHSFCKTCIVRYLETSKYCPICD. Residues 81 to 95 carry the Nuclear localization signal motif; the sequence is KLVPGLFKNEMKRRR. Residues 160–180 are interaction with PHC2; that stretch reads RYLRCPAAMTVMHLRKFLRSK. Residues 162–226 are interaction with E4F1; it reads LRCPAAMTVM…GPLPLKYRVR (65 aa). The disordered stretch occupies residues 232–324; that stretch reads MKMSHQRDGL…LNGSSATSSG (93 aa). A compositionally biased stretch (low complexity) spans 264 to 276; that stretch reads PSTSSCLPSPSTP. Residues 277-307 are compositionally biased toward polar residues; sequence VQSPHPQFPHISSTMNGTSNSPSANHQSSFA. Residues 313-324 show a composition bias toward low complexity; sequence SSLNGSSATSSG.

In terms of assembly, component of a PRC1-like complex. Identified in a PRC1-like HPRC-H complex with CBX2, CBX4, CBX8, PHC1, PHC2, PHC3, RING1 and RNF2. Interacts with RNF2/RING2. Interacts with RING1. Part of a complex that contains RNF2, UB2D3 and BMI1, where RNF2 and BMI1 form a tight heterodimer, and UB2D3 interacts only with RNF2. The complex composed of RNF2, UB2D3 and BMI1 binds nucleosomes, and has activity only with nucleosomal histone H2A. Interacts with CBX7 and CBX8. Interacts with SPOP. Part of a complex consisting of BMI1, CUL3 and SPOP. Interacts with E4F1. Interacts with PHC2. Interacts with zinc finger protein ZNF277. May be part of a complex including at least ZNF277, BMI1 and RNF2/RING2. Post-translationally, may be polyubiquitinated; which does not lead to proteasomal degradation. Monoubiquitinated. In terms of tissue distribution, detected in most organs with high expression levels in thymus, heart, brain and testis.

Its subcellular location is the nucleus. It is found in the cytoplasm. Component of a Polycomb group (PcG) multiprotein PRC1-like complex, a complex class required to maintain the transcriptionally repressive state of many genes, including Hox genes, throughout development. PcG PRC1 complex acts via chromatin remodeling and modification of histones; it mediates monoubiquitination of histone H2A 'Lys-119', rendering chromatin heritably changed in its expressibility. The complex composed of RNF2, UB2D3 and BMI1 binds nucleosomes, and has activity only with nucleosomal histone H2A. In the PRC1-like complex, regulates the E3 ubiquitin-protein ligase activity of RNF2/RING2. This Mus musculus (Mouse) protein is Polycomb complex protein BMI-1 (Bmi1).